We begin with the raw amino-acid sequence, 437 residues long: Cytochrome b (437 aa).

The chain crosses the membrane as a helical span at residues Trp-45 to Leu-65. 2 residues coordinate heme b: His-97 and His-111. A run of 9 helical transmembrane segments spans residues Gly-100–Ser-120, Trp-129–Leu-149, Phe-156–Ile-176, Phe-194–Trp-214, Phe-248–Ala-268, Phe-298–Val-318, Phe-330–Asp-350, Met-365–Thr-385, and Trp-391–Leu-411. The heme b site is built by His-198 and His-212.

It belongs to the cytochrome b family. The main subunits of complex b-c1 are: cytochrome b, cytochrome c1 and the Rieske protein. Heme b is required as a cofactor.

The protein localises to the cell membrane. Component of the ubiquinol-cytochrome c reductase complex (complex III or cytochrome b-c1 complex), which is a respiratory chain that generates an electrochemical potential coupled to ATP synthesis. The protein is Cytochrome b (petB) of Rhodobacter capsulatus (strain ATCC BAA-309 / NBRC 16581 / SB1003).